Here is a 123-residue protein sequence, read N- to C-terminus: Loki profilin-3 (123 aa).

It belongs to the Asgard profilin family.

The protein resides in the cytoplasm. The protein localises to the cytoskeleton. Binds to actin and affects the structure of the cytoskeleton. At high concentrations inhibits spontaneous rabbit actin nucleation. This strongly suggests this archaea has a profilin-regulated actin system, and actin-type genes can be identified in this organism. The polypeptide is Loki profilin-3 (Lokiarchaeum sp. (strain GC14_75)).